Reading from the N-terminus, the 691-residue chain is UvrABC system protein C (691 aa).

The region spanning 20 to 97 (STSGVYLWKD…IKKHTPRYNI (78 aa)) is the GIY-YIG domain. Positions 204-239 (DATVARLEKRMKRAVRQEAFEAAARIRDDIQAIRCI) constitute a UVR domain. Positions 662-691 (RSTTAPVREEYKEHEHDPQGESPGPGRKTD) are disordered. The span at 668–680 (VREEYKEHEHDPQ) shows a compositional bias: basic and acidic residues.

This sequence belongs to the UvrC family. Interacts with UvrB in an incision complex.

Its subcellular location is the cytoplasm. Its function is as follows. The UvrABC repair system catalyzes the recognition and processing of DNA lesions. UvrC both incises the 5' and 3' sides of the lesion. The N-terminal half is responsible for the 3' incision and the C-terminal half is responsible for the 5' incision. The protein is UvrABC system protein C of Treponema pallidum (strain Nichols).